The following is a 200-amino-acid chain: Kunitz type trypsin inhibitor 111 (200 aa).

A signal peptide spans 1–24; that stretch reads MSTISFTIFILANVWLLVVTTSIA. Cystine bridges form between cysteine 62/cysteine 108, cysteine 160/cysteine 172, and cysteine 165/cysteine 168.

Belongs to the protease inhibitor I3 (leguminous Kunitz-type inhibitor) family. Interacts with SCP1.

It is found in the secreted. It localises to the extracellular space. The protein localises to the apoplast. The sequence is that of Kunitz type trypsin inhibitor 111 (KPI111) from Medicago truncatula (Barrel medic).